The chain runs to 767 residues: Cation/H(+) antiporter 27 (767 aa).

A run of 11 helical transmembrane segments spans residues 39–59 (LPLL…FQFL), 63–83 (FGKF…PSVI), 99–119 (VYII…ITTC), 135–155 (INGI…AILI), 173–193 (HVAI…LSSL), 205–225 (LASM…NIAI), 242–262 (VLQM…MLWM), 280–300 (ICVL…PYFF), 323–343 (IGCF…GLNI), 371–391 (IALP…VGFI), and 415–435 (KSFG…IVIV).

Belongs to the monovalent cation:proton antiporter 2 (CPA2) transporter (TC 2.A.37) family. CHX (TC 2.A.37.4) subfamily. As to expression, specifically expressed in pollen.

Its subcellular location is the membrane. Its function is as follows. May operate as a cation/H(+) antiporter. In Arabidopsis thaliana (Mouse-ear cress), this protein is Cation/H(+) antiporter 27 (CHX27).